A 149-amino-acid polypeptide reads, in one-letter code: MGLEKSFILFPLLILVLGWVQSSLGKESPAMKFERQHMDSTGSSSSSPTYCNQMMKRRNMTQGSCKPVNTFVHEPLVDVHAVCSQENVTCKNGQKNCYKSHSTLHITDCRLKGSSKYPNCQYQTSQQQKHIIVACEGNPSVPVHXDAXV.

The N-terminal stretch at 1–25 is a signal peptide; it reads MGLEKSFILFPLLILVLGWVQSSLG. Substrate contacts are provided by Lys-32 and Arg-35. His-37 serves as the catalytic Proton acceptor. 4 disulfides stabilise this stretch: Cys-51–Cys-109, Cys-65–Cys-120, Cys-83–Cys-135, and Cys-90–Cys-97. Residue Asn-59 is glycosylated (N-linked (GlcNAc...) asparagine). 66-70 provides a ligand contact to substrate; that stretch reads KPVNT. N-linked (GlcNAc...) asparagine glycosylation is present at Asn-87. Lys-91 and Arg-110 together coordinate substrate. His-144 acts as the Proton donor in catalysis.

This sequence belongs to the pancreatic ribonuclease family. In terms of assembly, monomer. Interacts with and forms tight 1:1 complexes with RNH1. Dimerization of two such complexes may occur. Interaction with RNH1 inhibits this protein. As to expression, pancreas.

The protein resides in the secreted. It catalyses the reaction an [RNA] containing cytidine + H2O = an [RNA]-3'-cytidine-3'-phosphate + a 5'-hydroxy-ribonucleotide-3'-[RNA].. It carries out the reaction an [RNA] containing uridine + H2O = an [RNA]-3'-uridine-3'-phosphate + a 5'-hydroxy-ribonucleotide-3'-[RNA].. Endonuclease that catalyzes the cleavage of RNA on the 3' side of pyrimidine nucleotides. Acts on single-stranded and double-stranded RNA. This chain is Ribonuclease pancreatic (RNASE1), found in Abrothrix jelskii (Jelski's altiplano mouse).